A 72-amino-acid chain; its full sequence is Large ribosomal subunit protein uL29 (72 aa).

This sequence belongs to the universal ribosomal protein uL29 family.

This chain is Large ribosomal subunit protein uL29 (rpmC), found in Treponema pallidum (strain Nichols).